A 262-amino-acid chain; its full sequence is tRNA pseudouridine synthase A (262 aa).

The active-site Nucleophile is the Asp-51. Residue Tyr-109 coordinates substrate.

This sequence belongs to the tRNA pseudouridine synthase TruA family. Homodimer.

The enzyme catalyses uridine(38/39/40) in tRNA = pseudouridine(38/39/40) in tRNA. Formation of pseudouridine at positions 38, 39 and 40 in the anticodon stem and loop of transfer RNAs. In Legionella pneumophila (strain Lens), this protein is tRNA pseudouridine synthase A.